Reading from the N-terminus, the 35-residue chain is Fatty acid synthase (35 aa).

Serine 12 is an active-site residue.

Homodimer which is arranged in a head to tail fashion. Interacts with CEACAM1; this interaction is insulin and phosphorylation-dependent; reduces fatty-acid synthase activity.

The protein resides in the cytoplasm. Its subcellular location is the melanosome. The catalysed reaction is acetyl-CoA + n malonyl-CoA + 2n NADPH + 2n H(+) = a long-chain fatty acid + (n+1) CoA + n CO2 + 2n NADP(+).. In terms of biological role, fatty acid synthetase catalyzes the formation of long-chain fatty acids from acetyl-CoA, malonyl-CoA and NADPH. This multifunctional protein has 7 catalytic activities as an acyl carrier protein. This fragment is from the acyltransferase domain of the fatty acid synthetase. The protein is Fatty acid synthase (FASN) of Capra hircus (Goat).